The chain runs to 273 residues: 4-hydroxy-tetrahydrodipicolinate reductase (273 aa).

Residues 10–15 (GAGGRM), glutamate 36, 100–102 (GTT), and 124–127 (SGNM) each bind NAD(+). Histidine 157 functions as the Proton donor/acceptor in the catalytic mechanism. (S)-2,3,4,5-tetrahydrodipicolinate is bound at residue histidine 158. Catalysis depends on lysine 161, which acts as the Proton donor. 167-168 (GT) lines the (S)-2,3,4,5-tetrahydrodipicolinate pocket.

This sequence belongs to the DapB family.

It is found in the cytoplasm. The enzyme catalyses (S)-2,3,4,5-tetrahydrodipicolinate + NAD(+) + H2O = (2S,4S)-4-hydroxy-2,3,4,5-tetrahydrodipicolinate + NADH + H(+). It carries out the reaction (S)-2,3,4,5-tetrahydrodipicolinate + NADP(+) + H2O = (2S,4S)-4-hydroxy-2,3,4,5-tetrahydrodipicolinate + NADPH + H(+). It functions in the pathway amino-acid biosynthesis; L-lysine biosynthesis via DAP pathway; (S)-tetrahydrodipicolinate from L-aspartate: step 4/4. Functionally, catalyzes the conversion of 4-hydroxy-tetrahydrodipicolinate (HTPA) to tetrahydrodipicolinate. This is 4-hydroxy-tetrahydrodipicolinate reductase from Rhodopseudomonas palustris (strain BisA53).